Here is a 233-residue protein sequence, read N- to C-terminus: Orotidine 5'-phosphate decarboxylase (233 aa).

Residues D13, K35, 62–71 (DLKFHDIPNT), T122, R182, Q191, G211, and R212 contribute to the substrate site. The active-site Proton donor is K64.

The protein belongs to the OMP decarboxylase family. Type 1 subfamily. Homodimer.

It carries out the reaction orotidine 5'-phosphate + H(+) = UMP + CO2. Its pathway is pyrimidine metabolism; UMP biosynthesis via de novo pathway; UMP from orotate: step 2/2. Catalyzes the decarboxylation of orotidine 5'-monophosphate (OMP) to uridine 5'-monophosphate (UMP). In Pseudomonas putida (strain GB-1), this protein is Orotidine 5'-phosphate decarboxylase.